We begin with the raw amino-acid sequence, 545 residues long: Threonine--tRNA ligase catalytic subunit (545 aa).

Positions 139–433 (DHRLIGEKLD…LLEHFKGKLP (295 aa)) are catalytic. Residues cysteine 231, histidine 282, and histidine 410 each contribute to the Zn(2+) site.

This sequence belongs to the class-II aminoacyl-tRNA synthetase family. Homodimer. Probably interacts with its editing subunit. Requires Zn(2+) as cofactor.

It localises to the cytoplasm. The enzyme catalyses tRNA(Thr) + L-threonine + ATP = L-threonyl-tRNA(Thr) + AMP + diphosphate + H(+). In terms of biological role, catalyzes the attachment of threonine to tRNA(Thr) in a two-step reaction: L-threonine is first activated by ATP to form Thr-AMP and then transferred to the acceptor end of tRNA(Thr). Also activates L-serine and transfers it to tRNA(Thr) but cannot deacylate incorrectly charged amino acid; unlike most archaea the editing function is found in a freestanding protein. The chain is Threonine--tRNA ligase catalytic subunit from Saccharolobus islandicus (strain L.S.2.15 / Lassen #1) (Sulfolobus islandicus).